The following is a 131-amino-acid chain: Two-component response regulator ORR3 (131 aa).

The Response regulatory domain maps to 12–129 (HVLAVDDSIV…DVSRLCNRVI (118 aa)). Asp62 bears the 4-aspartylphosphate mark.

The protein belongs to the ARR family. Type-A subfamily. Two-component system major event consists of a His-to-Asp phosphorelay between a sensor histidine kinase (HK) and a response regulator (RR). In plants, the His-to-Asp phosphorelay involves an additional intermediate named Histidine-containing phosphotransfer protein (HPt). This multistep phosphorelay consists of a His-Asp-His-Asp sequential transfer of a phosphate group between first a His and an Asp of the HK protein, followed by the transfer to a conserved His of the HPt protein and finally the transfer to an Asp in the receiver domain of the RR protein. Expressed in roots, mature leaves and flowers, and at low levels in shoots.

Functionally, functions as a response regulator involved in His-to-Asp phosphorelay signal transduction system. Phosphorylation of the Asp residue in the receiver domain activates the ability of the protein to promote the transcription of target genes. Type-A response regulators seem to act as negative regulators of the cytokinin signaling. The chain is Two-component response regulator ORR3 from Oryza sativa subsp. indica (Rice).